Consider the following 220-residue polypeptide: MOB kinase activator-like 3 (220 aa).

Zn(2+) is bound by residues cysteine 83, cysteine 88, histidine 165, and histidine 170.

The protein belongs to the MOB1/phocein family.

The protein is MOB kinase activator-like 3 (Mob3) of Drosophila melanogaster (Fruit fly).